Consider the following 277-residue polypeptide: Carbonyl reductase [NADPH] 1 (277 aa).

Residue Ser-2 is modified to N-acetylserine. 2 positions are modified to phosphoserine: Ser-2 and Ser-30. NADP(+) is bound by residues 10 to 34, 63 to 64, and Asn-90; these read VTGG…GDVV and DI. Glutathione contacts are provided by residues 95–97 and Gln-106; that span reads FKV. Ser-140 contacts substrate. 193 to 194 provides a ligand contact to glutathione; sequence AY. Tyr-194 acts as the Proton acceptor in catalysis. NADP(+) is bound by residues 194–198 and 231–233; these read YGVTK and VRT. Lys-239 is subject to N6-1-carboxyethyl lysine.

Belongs to the short-chain dehydrogenases/reductases (SDR) family. As to quaternary structure, monomer. In terms of tissue distribution, expressed in kidney (at protein level).

The protein localises to the cytoplasm. It catalyses the reaction a secondary alcohol + NADP(+) = a ketone + NADPH + H(+). It carries out the reaction a primary alcohol + NADP(+) = an aldehyde + NADPH + H(+). The enzyme catalyses prostaglandin F2alpha + NADP(+) = prostaglandin E2 + NADPH + H(+). The catalysed reaction is prostaglandin E1 + NADP(+) = 15-oxoprostaglandin E1 + NADPH + H(+). It catalyses the reaction menadione + NADPH + H(+) = menadiol + NADP(+). It carries out the reaction prostaglandin D2 + NADP(+) = 15-oxoprostaglandin D2 + NADPH + H(+). The enzyme catalyses prostaglandin E2 + NADP(+) = 15-oxoprostaglandin E2 + NADPH + H(+). The catalysed reaction is prostaglandin F2alpha + NADP(+) = 15-oxoprostaglandin F2alpha + NADPH + H(+). It catalyses the reaction daunorubicin + NADPH + H(+) = 13-dihydrodaunorubicin + NADP(+). It carries out the reaction S-nitrosoglutathione + NADPH + H(+) = S-(hydroxysulfenamide)glutathione + NADP(+). The enzyme catalyses cortisol + NADPH + H(+) = 20beta-dihydrocortisol + NADP(+). The catalysed reaction is corticosterone + NADPH + H(+) = 20beta-dihydrocorticosterone + NADP(+). With respect to regulation, inhibited by quercetin, rutenin and its derivatives. Functionally, NADPH-dependent reductase with broad substrate specificity. Catalyzes the reduction of a wide variety of carbonyl compounds including quinones, prostaglandins, menadione, plus various xenobiotics. Catalyzes the reduction of the antitumor anthracyclines doxorubicin and daunorubicin to the cardiotoxic compounds doxorubicinol and daunorubicinol. Can convert prostaglandin E to prostaglandin F2-alpha. Can bind glutathione, which explains its higher affinity for glutathione-conjugated substrates. Catalyzes the reduction of S-nitrosoglutathione. In addition, participates in the glucocorticoid metabolism by catalyzing the NADPH-dependent cortisol/corticosterone into 20beta-dihydrocortisol (20b-DHF) or 20beta-corticosterone (20b-DHB), which are weak agonists of NR3C1 and NR3C2 in adipose tissue. This is Carbonyl reductase [NADPH] 1 from Homo sapiens (Human).